The sequence spans 161 residues: Nucleotide-binding protein Lferr_1091 (161 aa).

Belongs to the YajQ family.

Nucleotide-binding protein. The sequence is that of Nucleotide-binding protein Lferr_1091 from Acidithiobacillus ferrooxidans (strain ATCC 53993 / BNL-5-31) (Leptospirillum ferrooxidans (ATCC 53993)).